We begin with the raw amino-acid sequence, 487 residues long: Glutamyl-tRNA(Gln) amidotransferase subunit A (487 aa).

Catalysis depends on charge relay system residues Lys-74 and Ser-149. Catalysis depends on Ser-173, which acts as the Acyl-ester intermediate.

Belongs to the amidase family. GatA subfamily. In terms of assembly, heterotrimer of A, B and C subunits.

The catalysed reaction is L-glutamyl-tRNA(Gln) + L-glutamine + ATP + H2O = L-glutaminyl-tRNA(Gln) + L-glutamate + ADP + phosphate + H(+). Allows the formation of correctly charged Gln-tRNA(Gln) through the transamidation of misacylated Glu-tRNA(Gln) in organisms which lack glutaminyl-tRNA synthetase. The reaction takes place in the presence of glutamine and ATP through an activated gamma-phospho-Glu-tRNA(Gln). The sequence is that of Glutamyl-tRNA(Gln) amidotransferase subunit A from Prochlorococcus marinus (strain MIT 9211).